The chain runs to 245 residues: MANQKKKEMVHDFQQKFTDKMKSLGLHFKNIDLYQQAFSHSSFINDFNMNRLEHNERLEFLGDAVLELTVSRYLFDRHPHLPEGNLTKMRATIVCEPSLVIFANKIKLNELILLGKGEEKTGGRTRPSLISDAFEAFVGALYLDQGLDTVWTFAEKVIFPYVEDDELVGVVDFKTQFQEYVHSQNKGDVTYQLIKEEGPAHHRLFTSEVILENKAVAEGKGKTKKESEQKAAEQAYKLMKNKKSL.

Residues 17-146 (FTDKMKSLGL…FVGALYLDQG (130 aa)) form the RNase III domain. Glu59 contacts Mg(2+). Residue Asp63 is part of the active site. Asp132 and Glu135 together coordinate Mg(2+). The active site involves Glu135. A DRBM domain is found at 172 to 241 (DFKTQFQEYV…AEQAYKLMKN (70 aa)).

It belongs to the ribonuclease III family. As to quaternary structure, homodimer. Mg(2+) is required as a cofactor.

It is found in the cytoplasm. It carries out the reaction Endonucleolytic cleavage to 5'-phosphomonoester.. Its function is as follows. Digests double-stranded RNA. Involved in the processing of primary rRNA transcript to yield the immediate precursors to the large and small rRNAs (23S and 16S). Processes some mRNAs, and tRNAs when they are encoded in the rRNA operon. Processes pre-crRNA and tracrRNA of type II CRISPR loci if present in the organism. The sequence is that of Ribonuclease 3 from Staphylococcus epidermidis (strain ATCC 35984 / DSM 28319 / BCRC 17069 / CCUG 31568 / BM 3577 / RP62A).